A 537-amino-acid chain; its full sequence is Exodeoxyribonuclease 7 large subunit (537 aa).

Positions 508–537 (GEGAPVEPPQAARPSKGARTKAAQPSLFDD) are disordered.

The protein belongs to the XseA family. In terms of assembly, heterooligomer composed of large and small subunits.

It localises to the cytoplasm. The catalysed reaction is Exonucleolytic cleavage in either 5'- to 3'- or 3'- to 5'-direction to yield nucleoside 5'-phosphates.. Functionally, bidirectionally degrades single-stranded DNA into large acid-insoluble oligonucleotides, which are then degraded further into small acid-soluble oligonucleotides. This Azorhizobium caulinodans (strain ATCC 43989 / DSM 5975 / JCM 20966 / LMG 6465 / NBRC 14845 / NCIMB 13405 / ORS 571) protein is Exodeoxyribonuclease 7 large subunit.